Consider the following 864-residue polypeptide: Leucine--tRNA ligase (864 aa).

Residues 42–52 (PYPSGKLHMGH) carry the 'HIGH' region motif. A 'KMSKS' region motif is present at residues 624 to 628 (KMSKS). Lys-627 contacts ATP.

This sequence belongs to the class-I aminoacyl-tRNA synthetase family.

It localises to the cytoplasm. The catalysed reaction is tRNA(Leu) + L-leucine + ATP = L-leucyl-tRNA(Leu) + AMP + diphosphate. This is Leucine--tRNA ligase from Burkholderia vietnamiensis (strain G4 / LMG 22486) (Burkholderia cepacia (strain R1808)).